The following is a 535-amino-acid chain: uncharacterized protein (535 aa).

The next 6 helical transmembrane spans lie at 63 to 83 (LTGIVVALLVVTFAFPVPSIY), 90 to 110 (VTFGVAPAYATLALAIGTYWI), 143 to 163 (VAAVHLILWDIGGALLATLYG), 168 to 188 (VFVTIILFSVTICGVLVATNC), 226 to 246 (SLGSGVPVTGIATTALYVLLV), and 258 to 278 (VLILSITTLIFGFLVMWILAW). Positions 279–330 (LTAAPVRVVRAALKRVEQGDLRGDLVVFDGTELGELQRGFNAMVNGLRERER) constitute an HAMP domain. The 125-residue stretch at 362-486 (AVVFVDIVGS…KPVNQAARLC (125 aa)) folds into the Guanylate cyclase domain.

It belongs to the adenylyl cyclase class-3 family.

The protein localises to the cell membrane. This is an uncharacterized protein from Mycobacterium tuberculosis (strain ATCC 25618 / H37Rv).